The sequence spans 205 residues: Superoxide dismutase [Mn] (205 aa).

Positions 30, 78, 166, and 170 each coordinate Mn(2+).

The protein belongs to the iron/manganese superoxide dismutase family. Homodimer. The cofactor is Mn(2+).

It catalyses the reaction 2 superoxide + 2 H(+) = H2O2 + O2. In terms of biological role, destroys superoxide anion radicals which are normally produced within the cells and which are toxic to biological systems. The chain is Superoxide dismutase [Mn] (sodA) from Chlamydia muridarum (strain MoPn / Nigg).